Here is a 351-residue protein sequence, read N- to C-terminus: Putative ABC transporter permease protein MJ0876 (351 aa).

9 consecutive transmembrane segments (helical) span residues 4 to 24 (VGILLILFILSLILPFTALYL), 59 to 79 (LPPIIGAVLIGLTISVAGLML), 99 to 119 (VLMVVALVIFIDSLSHLFEIF), 124 to 144 (ILVAGWCGGIFSMILLIIIAL), 152 to 172 (VIIVALLLSYFFMGLRAYLIA), 196 to 216 (GDVIPMTICSIIFIIGVMFLI), 249 to 269 (FITGAIIPYVGLIAFIGIIAP), 284 to 304 (LVPATMFLGVILMVSCHILSL), and 322 to 342 (PLPIGAVLDILGGMLVVYLVY).

It belongs to the binding-protein-dependent transport system permease family. FecCD subfamily.

Its subcellular location is the cell membrane. Functionally, probably part of a binding-protein-dependent transport system. Probably responsible for the translocation of the substrate across the membrane. In Methanocaldococcus jannaschii (strain ATCC 43067 / DSM 2661 / JAL-1 / JCM 10045 / NBRC 100440) (Methanococcus jannaschii), this protein is Putative ABC transporter permease protein MJ0876.